The primary structure comprises 378 residues: MIRQIILIVSLIGISNAAYQCKDNNGSNVDWFVFYKLPHLWNHPDNVPISNGTGFLYFDVNNKNWKLMPQGMDVENNAVYYTLQQYYNSNMNTTFSYMYNDEWPDSTIWSNSSGHAKGVTVFDQYTGFWMIHSIPKFPSKDMFRFPSNAHYYGQMGICISYNTVSLATIAQQLFYYNTFTYQFNLPQSFANQFPVLSQLKNKEYNKSPPLTSTKVLKSLGGQHFRHFAKTGEWGKDLYSDFVGPTLKSSIKVETWNHQSGDEYNLPSVCDPNHVQSTMSAKYIRLPYAIDYSSYEDHSKFVVAYSESSSKPPIPYVCIGDINRQSHQIHRGGGTMCIYDQETYFQFANIISETVPCTKATAEKATLTVLLIAIITFFK.

The first 17 residues, 1–17, serve as a signal peptide directing secretion; sequence MIRQIILIVSLIGISNA. 3 N-linked (GlcNAc...) asparagine glycosylation sites follow: N51, N92, and N111.

The protein belongs to the DNase II family.

Its function is as follows. Involved in apoptotic DNA degradation. This chain is Cell death-related nuclease 6 (crn-6), found in Caenorhabditis elegans.